We begin with the raw amino-acid sequence, 213 residues long: Thymidylate kinase (213 aa).

ATP is bound at residue 10–17 (GLEGAGKT).

Belongs to the thymidylate kinase family.

The enzyme catalyses dTMP + ATP = dTDP + ADP. In terms of biological role, phosphorylation of dTMP to form dTDP in both de novo and salvage pathways of dTTP synthesis. The chain is Thymidylate kinase from Escherichia fergusonii (strain ATCC 35469 / DSM 13698 / CCUG 18766 / IAM 14443 / JCM 21226 / LMG 7866 / NBRC 102419 / NCTC 12128 / CDC 0568-73).